We begin with the raw amino-acid sequence, 175 residues long: B9 domain-containing protein 2 (175 aa).

The C2 B9-type domain maps to 2 to 118 (AEVHVIGQII…DCPTWRPLGS (117 aa)).

Belongs to the B9D family. As to quaternary structure, part of the tectonic-like complex (also named B9 complex). Interacts with TUBG1. As to expression, highest expression in thymus and skeletal muscle. Also expressed in spleen, kidney, lung, heart, microglia and liver. Detected in brain (at protein level).

Its subcellular location is the cytoplasm. It localises to the cytoskeleton. The protein localises to the cilium basal body. The protein resides in the cilium axoneme. It is found in the nucleus. In terms of biological role, component of the tectonic-like complex, a complex localized at the transition zone of primary cilia and acting as a barrier that prevents diffusion of transmembrane proteins between the cilia and plasma membranes. This Mus musculus (Mouse) protein is B9 domain-containing protein 2 (B9d2).